Here is a 540-residue protein sequence, read N- to C-terminus: Methionine--tRNA ligase 1 (540 aa).

Residues 10-20 (PYANGSLHLGH) carry the 'HIGH' region motif. Positions 141, 144, 153, and 156 each coordinate Zn(2+). The 'KMSKS' region motif lies at 327 to 331 (KISTS). T330 provides a ligand contact to ATP.

This sequence belongs to the class-I aminoacyl-tRNA synthetase family. MetG type 1 subfamily. In terms of assembly, monomer. The cofactor is Zn(2+).

It is found in the cytoplasm. It catalyses the reaction tRNA(Met) + L-methionine + ATP = L-methionyl-tRNA(Met) + AMP + diphosphate. Its function is as follows. Is required not only for elongation of protein synthesis but also for the initiation of all mRNA translation through initiator tRNA(fMet) aminoacylation. The polypeptide is Methionine--tRNA ligase 1 (Alkaliphilus oremlandii (strain OhILAs) (Clostridium oremlandii (strain OhILAs))).